The sequence spans 327 residues: MEFKLEAHRIVSISLGKIYNSRVQRGGIKLHKNLLVSLVLRSARQVYLSDPCPGLYLAGPAGTPAPPPQQQPGEPAAGPPAGWGEPPPPAARASWPETEPQPERSSVSDAPRVGDEVPVATVTGVGDVFQGGEADATEAAWSRVEGPRQAAAREAEGTAGGWGVFPEVSRAARRPCGCPLGGEDPPGTPAATPRAACCCAPQPAEDEPPAPPAVCPRKRCAAGVGGGPAGCPAPGSTPLKKPRRNLEQPPSGGEDDDAEEMETGNVANLISIFGSSFSGLLRKSPGGGREEEEGEESGPEAAEPGQICCDKPVLRDMNPWSTAIVAF.

Disordered stretches follow at residues 59-166 and 227-313; these read GPAG…GVFP and GPAG…DKPV. A compositionally biased stretch (low complexity) spans 71–84; sequence QPGEPAAGPPAGWG. The span at 253-262 shows a compositional bias: acidic residues; that stretch reads GEDDDAEEME. Over residues 265–278 the composition is skewed to polar residues; the sequence is NVANLISIFGSSFS.

This sequence belongs to the IER family. As to quaternary structure, monomer. Homodimer. Associates with the catalytic subunit of protein phosphatase PP2A. Interacts (via N- and C-terminal regions) with PPP2R2B. Interacts with PPP2R2A, PPP2R2C and PPP2R2D. Interacts (via N-terminus) with RPS6KB1. Interacts (via central region) with HSF1; this interaction promotes PPP2CA-induced HSF1 dephosphorylation, leading to enhanced HSF1 transcriptional activity. As to expression, expressed in acute myeloid leukemia (AML) cells.

Its subcellular location is the nucleus. The protein resides in the cytoplasm. Its function is as follows. Plays a role as a transcription factor. Mediates positive transcriptional regulation of several chaperone genes during the heat shock response in a HSF1-dependent manner. Mediates negative transcriptional regulation of CDC25B expression. Plays a role in the dephosphorylation of the heat shock factor HSF1 and ribosomal protein S6 kinase (S6K) by the protein phosphatase PP2A. Involved in the regulation of cell proliferation and resistance to thermal stress. Involved in the cell cycle checkpoint and survival in response to ionizing radiation. Associates with chromatin to the CDC25B promoter. The chain is Immediate early response gene 5 protein (IER5) from Homo sapiens (Human).